The following is a 288-amino-acid chain: Bifunctional protein FolD (288 aa).

NADP(+) contacts are provided by residues 166-168 (GAS) and isoleucine 232.

Belongs to the tetrahydrofolate dehydrogenase/cyclohydrolase family. As to quaternary structure, homodimer.

The enzyme catalyses (6R)-5,10-methylene-5,6,7,8-tetrahydrofolate + NADP(+) = (6R)-5,10-methenyltetrahydrofolate + NADPH. The catalysed reaction is (6R)-5,10-methenyltetrahydrofolate + H2O = (6R)-10-formyltetrahydrofolate + H(+). It functions in the pathway one-carbon metabolism; tetrahydrofolate interconversion. Its function is as follows. Catalyzes the oxidation of 5,10-methylenetetrahydrofolate to 5,10-methenyltetrahydrofolate and then the hydrolysis of 5,10-methenyltetrahydrofolate to 10-formyltetrahydrofolate. In Escherichia coli O139:H28 (strain E24377A / ETEC), this protein is Bifunctional protein FolD.